Reading from the N-terminus, the 232-residue chain is Ribonuclease P protein component 3 (232 aa).

This sequence belongs to the eukaryotic/archaeal RNase P protein component 3 family. As to quaternary structure, consists of a catalytic RNA component and at least 4-5 protein subunits.

It is found in the cytoplasm. It carries out the reaction Endonucleolytic cleavage of RNA, removing 5'-extranucleotides from tRNA precursor.. In terms of biological role, part of ribonuclease P, a protein complex that generates mature tRNA molecules by cleaving their 5'-ends. The protein is Ribonuclease P protein component 3 of Halobacterium salinarum (strain ATCC 29341 / DSM 671 / R1).